The chain runs to 138 residues: ATP synthase epsilon chain (138 aa).

The protein belongs to the ATPase epsilon chain family. F-type ATPases have 2 components, CF(1) - the catalytic core - and CF(0) - the membrane proton channel. CF(1) has five subunits: alpha(3), beta(3), gamma(1), delta(1), epsilon(1). CF(0) has three main subunits: a, b and c.

It localises to the cell membrane. Its function is as follows. Produces ATP from ADP in the presence of a proton gradient across the membrane. This Streptococcus gordonii (strain Challis / ATCC 35105 / BCRC 15272 / CH1 / DL1 / V288) protein is ATP synthase epsilon chain.